Here is a 152-residue protein sequence, read N- to C-terminus: Large ribosomal subunit protein uL13 (152 aa).

This sequence belongs to the universal ribosomal protein uL13 family. In terms of assembly, part of the 50S ribosomal subunit.

This protein is one of the early assembly proteins of the 50S ribosomal subunit, although it is not seen to bind rRNA by itself. It is important during the early stages of 50S assembly. The sequence is that of Large ribosomal subunit protein uL13 from Neorickettsia sennetsu (strain ATCC VR-367 / Miyayama) (Ehrlichia sennetsu).